The primary structure comprises 146 residues: Hemoglobin subunit beta (146 aa).

One can recognise a Globin domain in the interval 2–146; sequence QWSDSERTII…VVMFLGKQYH (145 aa). 2 residues coordinate heme b: histidine 63 and histidine 92.

It belongs to the globin family. As to quaternary structure, heterotetramer of two alpha chains and two beta chains. In terms of tissue distribution, red blood cells.

In terms of biological role, involved in oxygen transport from the lung to the various peripheral tissues. This is Hemoglobin subunit beta (hbb) from Artedidraco orianae (Barbeled plunderfish).